The chain runs to 326 residues: Acetyl-coenzyme A carboxylase carboxyl transferase subunit alpha (326 aa).

One can recognise a CoA carboxyltransferase C-terminal domain in the interval E46–E300.

This sequence belongs to the AccA family. Acetyl-CoA carboxylase is a heterohexamer composed of biotin carboxyl carrier protein (AccB), biotin carboxylase (AccC) and two subunits each of ACCase subunit alpha (AccA) and ACCase subunit beta (AccD).

The protein resides in the cytoplasm. The catalysed reaction is N(6)-carboxybiotinyl-L-lysyl-[protein] + acetyl-CoA = N(6)-biotinyl-L-lysyl-[protein] + malonyl-CoA. It functions in the pathway lipid metabolism; malonyl-CoA biosynthesis; malonyl-CoA from acetyl-CoA: step 1/1. Its function is as follows. Component of the acetyl coenzyme A carboxylase (ACC) complex. First, biotin carboxylase catalyzes the carboxylation of biotin on its carrier protein (BCCP) and then the CO(2) group is transferred by the carboxyltransferase to acetyl-CoA to form malonyl-CoA. The polypeptide is Acetyl-coenzyme A carboxylase carboxyl transferase subunit alpha (Gloeobacter violaceus (strain ATCC 29082 / PCC 7421)).